The sequence spans 304 residues: Galactose 1-dehydrogenase (304 aa).

This sequence belongs to the Gfo/Idh/MocA family. In terms of assembly, homodimer.

It is found in the cytoplasm. It carries out the reaction D-galactose + NAD(+) = D-galactono-1,4-lactone + NADH + H(+). The protein operates within carbohydrate metabolism; galactose metabolism. Catalyzes the dehydrogenation of D-galactose by either NAD(+) or NADP(+). Oxidizes following sugars in decreasing order: D-fucose &gt; D-galactose &gt; L-arabinose &gt; 2-deoxy-D-galactose &gt;&gt; 4-deoxy-D-galactose &gt; 2-deoxy-2-amino-D-galactose. The protein is Galactose 1-dehydrogenase (gal) of Pseudomonas fluorescens.